The primary structure comprises 351 residues: Heat-inducible transcription repressor HrcA (351 aa).

This sequence belongs to the HrcA family.

Functionally, negative regulator of class I heat shock genes (grpE-dnaK-dnaJ and groELS operons). Prevents heat-shock induction of these operons. In Beutenbergia cavernae (strain ATCC BAA-8 / DSM 12333 / CCUG 43141 / JCM 11478 / NBRC 16432 / NCIMB 13614 / HKI 0122), this protein is Heat-inducible transcription repressor HrcA.